Here is a 201-residue protein sequence, read N- to C-terminus: 7-methyl-GTP pyrophosphatase (201 aa).

The active-site Proton acceptor is Asp-73.

This sequence belongs to the Maf family. YceF subfamily. The cofactor is a divalent metal cation.

The protein localises to the cytoplasm. The catalysed reaction is N(7)-methyl-GTP + H2O = N(7)-methyl-GMP + diphosphate + H(+). In terms of biological role, nucleoside triphosphate pyrophosphatase that hydrolyzes 7-methyl-GTP (m(7)GTP). May have a dual role in cell division arrest and in preventing the incorporation of modified nucleotides into cellular nucleic acids. The sequence is that of 7-methyl-GTP pyrophosphatase from Thiobacillus denitrificans (strain ATCC 25259 / T1).